The sequence spans 506 residues: NAD(P)H-quinone oxidoreductase subunit 2 (506 aa).

A run of 14 helical transmembrane segments spans residues 14-34 (AIIP…VDLA), 42-62 (WAPV…ALQW), 79-99 (LAIA…LISW), 108-128 (PIGE…LLCG), 132-152 (LVSV…LSGY), 167-187 (LLVG…LYGL), 206-226 (FITS…IAAV), 240-260 (PTPV…AFAI), 276-296 (LLFT…ALAQ), 302-322 (MLAY…VSGT), 330-350 (VLYL…VILF), 374-394 (LGLS…GFFG), 409-429 (LLVV…ISVI), and 462-482 (IALY…NPLF).

Belongs to the complex I subunit 2 family. In terms of assembly, NDH-1 can be composed of about 15 different subunits; different subcomplexes with different compositions have been identified which probably have different functions.

The protein resides in the cellular thylakoid membrane. It catalyses the reaction a plastoquinone + NADH + (n+1) H(+)(in) = a plastoquinol + NAD(+) + n H(+)(out). The enzyme catalyses a plastoquinone + NADPH + (n+1) H(+)(in) = a plastoquinol + NADP(+) + n H(+)(out). Its function is as follows. NDH-1 shuttles electrons from an unknown electron donor, via FMN and iron-sulfur (Fe-S) centers, to quinones in the respiratory and/or the photosynthetic chain. The immediate electron acceptor for the enzyme in this species is believed to be plastoquinone. Couples the redox reaction to proton translocation, and thus conserves the redox energy in a proton gradient. Cyanobacterial NDH-1 also plays a role in inorganic carbon-concentration. The protein is NAD(P)H-quinone oxidoreductase subunit 2 of Prochlorococcus marinus subsp. pastoris (strain CCMP1986 / NIES-2087 / MED4).